The chain runs to 268 residues: MAEQRIDTQYEDLLRHVLATGTPKSDRTGTGTRSVFGHQLRYDLSAGFPLVTTKRVHFKSIALELLWFLRGDGNVRWLQERGVTIWDEWADENGDLGPVYGVQWRSWPTPDGRHVDQIAQVLHTLRTDPDSRRMVVSAWNVAELDRMALAPCHAFFQFHVADGKLSCQLYQRSADLFLGVPFNIASYALLTHLVAAEVGLEVGDFVWTGGDVHVYDNHVEQVTEQLTRTPYPFPRLAVRPAGLFEHEYEDFEVLDYRHHPAIKAPVAV.

R27 contacts dUMP. H57 contacts (6R)-5,10-methylene-5,6,7,8-tetrahydrofolate. 132 to 133 (RR) provides a ligand contact to dUMP. The active-site Nucleophile is C152. Residues 172-175 (RSAD), N183, and 213-215 (HVY) contribute to the dUMP site. Position 175 (D175) interacts with (6R)-5,10-methylene-5,6,7,8-tetrahydrofolate. Residue A267 coordinates (6R)-5,10-methylene-5,6,7,8-tetrahydrofolate.

It belongs to the thymidylate synthase family. Bacterial-type ThyA subfamily. As to quaternary structure, homodimer.

The protein resides in the cytoplasm. It carries out the reaction dUMP + (6R)-5,10-methylene-5,6,7,8-tetrahydrofolate = 7,8-dihydrofolate + dTMP. It participates in pyrimidine metabolism; dTTP biosynthesis. In terms of biological role, catalyzes the reductive methylation of 2'-deoxyuridine-5'-monophosphate (dUMP) to 2'-deoxythymidine-5'-monophosphate (dTMP) while utilizing 5,10-methylenetetrahydrofolate (mTHF) as the methyl donor and reductant in the reaction, yielding dihydrofolate (DHF) as a by-product. This enzymatic reaction provides an intracellular de novo source of dTMP, an essential precursor for DNA biosynthesis. This chain is Thymidylate synthase, found in Kineococcus radiotolerans (strain ATCC BAA-149 / DSM 14245 / SRS30216).